Consider the following 350-residue polypeptide: 3'-hydroxy-N-methyl-(S)-coclaurine 4'-O-methyltransferase (350 aa).

S-adenosyl-L-methionine-binding residues include G196, D219, D239, M240, and K253. The Proton acceptor role is filled by H257.

The protein belongs to the class I-like SAM-binding methyltransferase superfamily. Cation-independent O-methyltransferase family. COMT subfamily. In terms of assembly, homodimer.

It carries out the reaction (S)-3'-hydroxy-N-methylcoclaurine + S-adenosyl-L-methionine = (S)-reticuline + S-adenosyl-L-homocysteine + H(+). The protein operates within alkaloid biosynthesis; (S)-reticuline biosynthesis; (S)-reticuline from (S)-norcoclaurine: step 4/4. Functionally, catalyzes the transfer of the methyl group to the 4'-hydroxyl group of 3'-hydroxy-N-methylcoclaurine to form reticuline. This chain is 3'-hydroxy-N-methyl-(S)-coclaurine 4'-O-methyltransferase, found in Coptis japonica (Japanese goldthread).